The sequence spans 365 residues: Holliday junction branch migration complex subunit RuvB (365 aa).

The segment at 1-191 (MNFDPIDDFD…FGFTAHMDFY (191 aa)) is large ATPase domain (RuvB-L). Residues Leu30, Arg31, Gly72, Lys75, Thr76, Ser77, 138–140 (EDF), Arg181, Tyr191, and Arg228 each bind ATP. Thr76 contacts Mg(2+). The tract at residues 192 to 262 (EPEELQQILM…VAQAALAVYD (71 aa)) is small ATPAse domain (RuvB-S). The head domain (RuvB-H) stretch occupies residues 265–365 (QLGLDRLDRS…QATLFDPNGE (101 aa)). DNA contacts are provided by Arg320 and Arg325.

Belongs to the RuvB family. In terms of assembly, homohexamer. Forms an RuvA(8)-RuvB(12)-Holliday junction (HJ) complex. HJ DNA is sandwiched between 2 RuvA tetramers; dsDNA enters through RuvA and exits via RuvB. An RuvB hexamer assembles on each DNA strand where it exits the tetramer. Each RuvB hexamer is contacted by two RuvA subunits (via domain III) on 2 adjacent RuvB subunits; this complex drives branch migration. In the full resolvosome a probable DNA-RuvA(4)-RuvB(12)-RuvC(2) complex forms which resolves the HJ.

The protein localises to the cytoplasm. The enzyme catalyses ATP + H2O = ADP + phosphate + H(+). Functionally, the RuvA-RuvB-RuvC complex processes Holliday junction (HJ) DNA during genetic recombination and DNA repair, while the RuvA-RuvB complex plays an important role in the rescue of blocked DNA replication forks via replication fork reversal (RFR). RuvA specifically binds to HJ cruciform DNA, conferring on it an open structure. The RuvB hexamer acts as an ATP-dependent pump, pulling dsDNA into and through the RuvAB complex. RuvB forms 2 homohexamers on either side of HJ DNA bound by 1 or 2 RuvA tetramers; 4 subunits per hexamer contact DNA at a time. Coordinated motions by a converter formed by DNA-disengaged RuvB subunits stimulates ATP hydrolysis and nucleotide exchange. Immobilization of the converter enables RuvB to convert the ATP-contained energy into a lever motion, pulling 2 nucleotides of DNA out of the RuvA tetramer per ATP hydrolyzed, thus driving DNA branch migration. The RuvB motors rotate together with the DNA substrate, which together with the progressing nucleotide cycle form the mechanistic basis for DNA recombination by continuous HJ branch migration. Branch migration allows RuvC to scan DNA until it finds its consensus sequence, where it cleaves and resolves cruciform DNA. In Rhodococcus erythropolis (strain PR4 / NBRC 100887), this protein is Holliday junction branch migration complex subunit RuvB.